The chain runs to 614 residues: UvrABC system protein C (614 aa).

The GIY-YIG domain maps to 26–104 (NLPGVYKMLG…IKEYRPPYNV (79 aa)). In terms of domain architecture, UVR spans 215 to 250 (SDIHTALIEKMEASAEELDFEKAVFYRDQLSMLREV).

Belongs to the UvrC family. In terms of assembly, interacts with UvrB in an incision complex.

It localises to the cytoplasm. Its function is as follows. The UvrABC repair system catalyzes the recognition and processing of DNA lesions. UvrC both incises the 5' and 3' sides of the lesion. The N-terminal half is responsible for the 3' incision and the C-terminal half is responsible for the 5' incision. In Psychrobacter cryohalolentis (strain ATCC BAA-1226 / DSM 17306 / VKM B-2378 / K5), this protein is UvrABC system protein C.